Here is a 222-residue protein sequence, read N- to C-terminus: Ribonuclease 3 (222 aa).

The first 19 residues, 1–19, serve as a signal peptide directing secretion; it reads MKFFIFILALQQLYVQSFA. Gln30 provides a ligand contact to RNA. The cysteines at positions 36 and 42 are disulfide-linked. RNA is bound by residues His57, Phe107, 110–111, and 114–115; these read HE and KH. His57 (proton donor) is an active-site residue. 3 cysteine pairs are disulfide-bonded: Cys72-Cys118, Cys178-Cys213, and Cys194-Cys205. Glu111 is an active-site residue. Residue His115 is the Proton acceptor of the active site.

Belongs to the RNase T2 family.

It carries out the reaction a ribonucleotidyl-ribonucleotide-RNA + H2O = a 3'-end 3'-phospho-ribonucleotide-RNA + a 5'-end dephospho-ribonucleoside-RNA + H(+). In terms of biological role, may remobilize phosphate, particularly when cells senesce or when phosphate becomes limiting. The polypeptide is Ribonuclease 3 (RNS3) (Arabidopsis thaliana (Mouse-ear cress)).